Here is a 545-residue protein sequence, read N- to C-terminus: MIRPLPPELRGLLARGEVLLTVKDAVRELLENALDAGARRVRVELWGGGLKRLVVEDDGEGIPLEDLPLAVEPYATSKLQDLEGIRTLGFRGQALYALRQAARLRIRSRPRGQLGGGLLLAEGERVEVRPVPAPPGTRVEVEGLFLGEGRDPKGEVRGVLELLKRYLLHHPRLALALFAEGEARLLFPGAGLEEAARLAFGRLLAKRLLPLAYGAGGLEVQGLVSRPEVSRTRPDRLFLAVNGRPVAFPEGLLRRVRRAYRELLPEGHYPVGVLNLFLPQEAFRLRLDARKEEVVLSEEAEALVEEALLALFRRENLARALPEPKPLQPLSPPTASGLPRLRFLAQFRESYLLAEAGDTLYVVDQHAAHERILYEDLLKRVAEGPKPLPRPLLVLLAPEEEALLEAGQEALAALFRWEPFGPGRVRLLMAPAFLHPYPLLLPEVFKEALRGEGRSLKALLARLACLPAVKAGHPLGEAQGQALLDALLTCETPWACPHGRPVLLALKEEDLIRRFGRRSGARGGGEARPRPQEESFPEAPLPREP.

The segment at 516–545 (GRRSGARGGGEARPRPQEESFPEAPLPREP) is disordered.

The protein belongs to the DNA mismatch repair MutL/HexB family.

In terms of biological role, this protein is involved in the repair of mismatches in DNA. It is required for dam-dependent methyl-directed DNA mismatch repair. May act as a 'molecular matchmaker', a protein that promotes the formation of a stable complex between two or more DNA-binding proteins in an ATP-dependent manner without itself being part of a final effector complex. In Thermus thermophilus (strain ATCC BAA-163 / DSM 7039 / HB27), this protein is DNA mismatch repair protein MutL.